A 105-amino-acid chain; its full sequence is Urease subunit beta (105 aa).

The protein belongs to the urease beta subunit family. In terms of assembly, heterotrimer of UreA (gamma), UreB (beta) and UreC (alpha) subunits. Three heterotrimers associate to form the active enzyme.

It is found in the cytoplasm. The enzyme catalyses urea + 2 H2O + H(+) = hydrogencarbonate + 2 NH4(+). It participates in nitrogen metabolism; urea degradation; CO(2) and NH(3) from urea (urease route): step 1/1. The sequence is that of Urease subunit beta from Marinomonas sp. (strain MWYL1).